The following is a 356-amino-acid chain: RuBisCO accumulation factor 1 (356 aa).

Residues 7–185 (ALTTEVLQRL…RQALEKLLTD (179 aa)) are N-terminal alpha-helix. A C-terminal beta-sheet region spans residues 209–342 (PYLVPVAGTA…LLLVLRPPQV (134 aa)).

It belongs to the RAF family. In terms of assembly, homodimer. Forms an RbcL(8)-Raf1(8) complex. Forms complexes of many stoichiometries with RbcL with and without RbcS. RbcX and Raf1 can bind simultaneously to RbcL.

It is found in the cytoplasm. In terms of biological role, a major RuBisCO chaperone. Acts after GroEL-GroES chaperonin to fold and/or assemble the large subunit of RuBisCO (ccbL, rbcL). Cooperates with RbcX in RbcL folding, plays the major role in assembly of dimers into RbcL(8)-Raf1(8) intermediate complexes. RbcS replaces Raf1, leading to holoenzyme formation. Required for optimal reconstitution of RuBisCO upon expression of rbcL-rbcS subunits in E.coli. Only interacts with the large subunit (cbbL, rbcL). Probably acts in the final stages of RuBisCO assembly, possibly participating in the addition of the small subunit (ccbS, rbcS). This chain is RuBisCO accumulation factor 1, found in Thermosynechococcus vestitus (strain NIES-2133 / IAM M-273 / BP-1).